We begin with the raw amino-acid sequence, 874 residues long: Alanine--tRNA ligase (874 aa).

Residues His-562, His-566, Cys-665, and His-669 each contribute to the Zn(2+) site.

This sequence belongs to the class-II aminoacyl-tRNA synthetase family. It depends on Zn(2+) as a cofactor.

The protein resides in the cytoplasm. It carries out the reaction tRNA(Ala) + L-alanine + ATP = L-alanyl-tRNA(Ala) + AMP + diphosphate. Catalyzes the attachment of alanine to tRNA(Ala) in a two-step reaction: alanine is first activated by ATP to form Ala-AMP and then transferred to the acceptor end of tRNA(Ala). Also edits incorrectly charged Ser-tRNA(Ala) and Gly-tRNA(Ala) via its editing domain. The protein is Alanine--tRNA ligase of Stutzerimonas stutzeri (strain A1501) (Pseudomonas stutzeri).